Reading from the N-terminus, the 323-residue chain is Serine/threonine-protein kinase-transforming protein raf (323 aa).

The Protein kinase domain maps to Val-24–Leu-284. ATP is bound by residues Ile-30–Val-38 and Lys-50. The active-site Proton acceptor is the Asp-143.

It belongs to the protein kinase superfamily. TKL Ser/Thr protein kinase family. RAF subfamily.

The enzyme catalyses L-seryl-[protein] + ATP = O-phospho-L-seryl-[protein] + ADP + H(+). It carries out the reaction L-threonyl-[protein] + ATP = O-phospho-L-threonyl-[protein] + ADP + H(+). In Murine sarcoma virus 3611, this protein is Serine/threonine-protein kinase-transforming protein raf (V-RAF).